A 365-amino-acid chain; its full sequence is Cobalt-precorrin-5B C(1)-methyltransferase (365 aa).

This sequence belongs to the CbiD family.

It catalyses the reaction Co-precorrin-5B + S-adenosyl-L-methionine = Co-precorrin-6A + S-adenosyl-L-homocysteine. Its pathway is cofactor biosynthesis; adenosylcobalamin biosynthesis; cob(II)yrinate a,c-diamide from sirohydrochlorin (anaerobic route): step 6/10. Catalyzes the methylation of C-1 in cobalt-precorrin-5B to form cobalt-precorrin-6A. The chain is Cobalt-precorrin-5B C(1)-methyltransferase from Geobacillus sp. (strain WCH70).